A 638-amino-acid polypeptide reads, in one-letter code: 1-deoxy-D-xylulose-5-phosphate synthase (638 aa).

Thiamine diphosphate is bound by residues H79 and 120 to 122 (GHS). D151 is a binding site for Mg(2+). Thiamine diphosphate-binding positions include 152–153 (GA), N182, Y291, and E373. N182 provides a ligand contact to Mg(2+).

The protein belongs to the transketolase family. DXPS subfamily. As to quaternary structure, homodimer. The cofactor is Mg(2+). Requires thiamine diphosphate as cofactor.

It catalyses the reaction D-glyceraldehyde 3-phosphate + pyruvate + H(+) = 1-deoxy-D-xylulose 5-phosphate + CO2. It functions in the pathway metabolic intermediate biosynthesis; 1-deoxy-D-xylulose 5-phosphate biosynthesis; 1-deoxy-D-xylulose 5-phosphate from D-glyceraldehyde 3-phosphate and pyruvate: step 1/1. Its function is as follows. Catalyzes the acyloin condensation reaction between C atoms 2 and 3 of pyruvate and glyceraldehyde 3-phosphate to yield 1-deoxy-D-xylulose-5-phosphate (DXP). This Xanthomonas campestris pv. campestris (strain 8004) protein is 1-deoxy-D-xylulose-5-phosphate synthase.